A 1488-amino-acid chain; its full sequence is MIERGKFRSLTLINWNGFFARTFDLDELVTTLSGGNGAGKSTTMAAFVTALIPDLTLLHFRNTTEAGATSGSRDKGLHGKLKAGVCYSMLDTINSRHQRVVVGVRLQQVAGRDRKVDIKPFAIQGLPMSVQPTQLVTETLNERQARVLSLAELKDKLDEMEGVQFKQFNSITDYHSLMFDLGIIARRLRSASDRSKFYRLIEASLYGGISSAITRSLRDYLLPENSGVRKAFQDMEAALRENRLTLEAIRVTQSDRDLFKHLISEATDYVAADYMRHANERRVHLDQALAFRRELYTSRKQLAAEQYKHVDMARELGEHNGAEGSLEADYQAASDHLNLVQTALRQQEKIERYEADLEELQIRLEEQNEVVAEAAEMQDENEARAEAAELEVDELKSQLADYQQALDVQQTRAIQYNQAISALARAKELCHLPDLTPESAAEWLDTFQAKEQEATEKLLSLEQKMSVAQTAHSQFEQAYQLVAAINGPLARSEAWDVARELLRDGVNQRHLAEQVQPLRMRLSELEQRLREQQEAERLLAEFCKRQGKNFDIDELEALHQELEARIASLSDSVSSASEQRMALRQEQEQLQSRIQHLMQRAPVWLAAQNSLNQLSEQCGEEFTSSQEVTEYLQQLLEREREAIVERDEVGARKNAVDEEIERLSQPGGAEDQRLNALAERFGGVLLSEIYDDVSLEDAPYFSALYGPSRHAIVVPDLSQIAEQLEGLTDCPEDLYLIEGDPQSFDDSVFSVDELEKAVVVKIADRQWRYSRFPSLPIFGRAARENRIESLHAEREVLSERFATLSFDVQKTQRLHQAFSRFIGSHLSVAFEDDPEAEIRRLNGRRVELERALATHESDNQQQRLQFEQAKEGVSALNRLLPRLNLLADETLADRVDEIQERLDEAQEAARFVQQYGNQLAKLEPVVSVLQSDPEQFEQLKEDYAWSQQMQRDARQQAFALAEVVERRAHFSYSDSAEMLSGNSDLNEKLRQRLEQAEAERTRAREALRSHAAQLSQYSQVLASLKSSYDTKKELLNDLQRELQDIGVRADSGAEERARQRRDELHAQLSNNRSRRNQLEKALTFCEAEMENLARKLRKLERDYHEMREQVVTAKAGWCAVMRMVKDNGVERRLHRRELAYLSADELRSMSDKALGALRLAVADNEHLRDVLRLSEDPKRPERKIQFFVAVYQHLRERIRQDIIRTDDPVEAIEQMEIELSRLTEELTSREQKLAISSRSVANIIRKTIQREQNRIRMLNQGLQSVSFGQVNSVRLNVNVRETHATLLDVLSEQQEQHQDLFNSNRLTFSEALAKLYQRLNPQIDMGQRTPQTIGEELLDYRNYLEMEVEVNRGSDGWLRAESGALSTGEAIGTGMSILVMVVQSWEDEARRLRGKDISPCRLLFLDEAARLDARSIATLFELCERLQMQLIIAAPENISPEKGTTYKLVRKVFQNTEHVHVVGLRGFAPQLPETLPGTQTEDTPSEAS.

Residue 34-41 (GGNGAGKS) participates in ATP binding. Coiled-coil stretches lie at residues 326–418 (LEAD…QYNQ), 444–472 (LDTFQAKEQEATEKLLSLEQKMSVAQTAH), and 509–602 (RHLA…QRAP). The segment at 666–783 (PGGAEDQRLN…SLPIFGRAAR (118 aa)) is flexible hinge. Coiled coils occupy residues 835-923 (EAEI…AKLE), 977-1116 (EMLS…AKAG), and 1209-1265 (VEAI…LQSV). The disordered stretch occupies residues 1049 to 1074 (ADSGAEERARQRRDELHAQLSNNRSR). Positions 1051–1065 (SGAEERARQRRDELH) are enriched in basic and acidic residues.

This sequence belongs to the SMC family. MukB subfamily. Homodimerization via its hinge domain. Binds to DNA via its C-terminal region. Interacts, and probably forms a ternary complex, with MukE and MukF via its C-terminal region. The complex formation is stimulated by calcium or magnesium. Interacts with tubulin-related protein FtsZ.

The protein resides in the cytoplasm. It localises to the nucleoid. Functionally, plays a central role in chromosome condensation, segregation and cell cycle progression. Functions as a homodimer, which is essential for chromosome partition. Involved in negative DNA supercoiling in vivo, and by this means organize and compact chromosomes. May achieve or facilitate chromosome segregation by condensation DNA from both sides of a centrally located replisome during cell division. This chain is Chromosome partition protein MukB, found in Salmonella schwarzengrund (strain CVM19633).